The chain runs to 390 residues: 1-deoxy-D-xylulose 5-phosphate reductoisomerase (390 aa).

The NADPH site is built by Thr10, Gly11, Ser12, Ile13, Gly36, Arg37, Asn38, and Asn121. Lys122 contacts 1-deoxy-D-xylulose 5-phosphate. Glu123 is an NADPH binding site. Asp147 is a Mn(2+) binding site. Residues Ser148, Glu149, Ser173, and His196 each contribute to the 1-deoxy-D-xylulose 5-phosphate site. Glu149 serves as a coordination point for Mn(2+). Residue Gly202 coordinates NADPH. 1-deoxy-D-xylulose 5-phosphate contacts are provided by Ser209, Asn214, Lys215, and Glu218. Glu218 provides a ligand contact to Mn(2+). Positions 367 to 390 (AASEHGRREAEKRVGARAHAPAGR) are disordered. Residues 370–380 (EHGRREAEKRV) are compositionally biased toward basic and acidic residues.

This sequence belongs to the DXR family. It depends on Mg(2+) as a cofactor. The cofactor is Mn(2+).

The catalysed reaction is 2-C-methyl-D-erythritol 4-phosphate + NADP(+) = 1-deoxy-D-xylulose 5-phosphate + NADPH + H(+). It participates in isoprenoid biosynthesis; isopentenyl diphosphate biosynthesis via DXP pathway; isopentenyl diphosphate from 1-deoxy-D-xylulose 5-phosphate: step 1/6. In terms of biological role, catalyzes the NADPH-dependent rearrangement and reduction of 1-deoxy-D-xylulose-5-phosphate (DXP) to 2-C-methyl-D-erythritol 4-phosphate (MEP). The sequence is that of 1-deoxy-D-xylulose 5-phosphate reductoisomerase from Anaeromyxobacter sp. (strain K).